The sequence spans 387 residues: 3-ketoacyl-CoA thiolase (387 aa).

The active-site Acyl-thioester intermediate is Cys-91. Active-site proton acceptor residues include His-343 and Cys-373.

The protein belongs to the thiolase-like superfamily. Thiolase family. In terms of assembly, heterotetramer of two alpha chains (FadB) and two beta chains (FadA).

Its subcellular location is the cytoplasm. The enzyme catalyses an acyl-CoA + acetyl-CoA = a 3-oxoacyl-CoA + CoA. The protein operates within lipid metabolism; fatty acid beta-oxidation. In terms of biological role, catalyzes the final step of fatty acid oxidation in which acetyl-CoA is released and the CoA ester of a fatty acid two carbons shorter is formed. The sequence is that of 3-ketoacyl-CoA thiolase from Shigella flexneri serotype 5b (strain 8401).